Consider the following 435-residue polypeptide: GPI-anchor transamidase component PIGU (435 aa).

Over 2-3 (AA) the chain is Cytoplasmic. A helical transmembrane segment spans residues 4–22 (PLVLVLVVAVTVRAALFRS). At 23-78 (SLAEFISERVEVVSPLSSWKRVVEGLSLLDLGVSPYSGAVFHETPLIIYLFHFLID) the chain is on the lumenal side. The helical transmembrane segment at 79-99 (YAELVFMITDALTAIALYFAI) threads the bilayer. Topologically, residues 100 to 136 (QDFNKVVFKKQKLLLELDQYAPDVAELIRTPMEMRYI) are cytoplasmic. The next 4 helical transmembrane spans lie at 137 to 158 (PLKV…VAKS), 159 to 178 (TCAI…IKGS), 179 to 194 (AFLS…YQSL), and 195 to 205 (YPLTLFVPGLL). The Cytoplasmic portion of the chain corresponds to 206 to 222 (YLLQRQYIPVKMKSKAF). A cardiolipin contacts are provided by K216 and M217. The helical transmembrane segment at 223-244 (WIFSWEYAMMYVGSLVVIICLS) threads the bilayer. Residues 245-286 (FFLLSSWDFIPAVYGFILSVPDLTPNIGLFWYFFAEMFEHFS) are Lumenal-facing. A helical transmembrane segment spans residues 287-306 (LFFVCVFQINVFFYTIPLAI). Residues 307–311 (KLKEH) are Cytoplasmic-facing. K309 lines the a cardiolipin pocket. The next 2 membrane-spanning stretches (helical) occupy residues 312–331 (PIFF…SYPT) and 332–345 (VGDV…FPVW). The Cytoplasmic segment spans residues 346–354 (NHLYRFLRN). A helical transmembrane segment spans residues 355–372 (IFVLTCIIIVCSLLFPVL). Over 373-384 (WHLWIYAGSANS) the chain is Lumenal. Positions 383 and 385 each coordinate a 2-acyl-6-[6-phosphoethanolamine-alpha-D-mannosyl-(1-&gt;2)-6-phosphoethanolamine-alpha-D-mannosyl-(1-&gt;6)-2-phosphoethanolamine-alpha-D-mannosyl-(1-&gt;4)-alpha-D-glucosaminyl]-1-(1-radyl,2-acyl-sn-glycero-3-phospho)-1D-myo-inositol. Residues 385–406 (NFFYAITLTFNVGQILLISDYF) traverse the membrane as a helical segment. The Cytoplasmic segment spans residues 407–435 (YAFLRREYYLTHGLYLTAKDGTEAMLVLK).

The protein belongs to the PIGU family. In terms of assembly, heteropentamer. Part of the GPI-anchor transamidase complex, consisting of PIGK, PIGT, PIGS, PIGU and GAA1.

It is found in the endoplasmic reticulum membrane. Its pathway is glycolipid biosynthesis; glycosylphosphatidylinositol-anchor biosynthesis. Functionally, component of the glycosylphosphatidylinositol-anchor (GPI-anchor) transamidase (GPI-T) complex that catalyzes the formation of the linkage between a proprotein and a GPI-anchor and participates in GPI anchored protein biosynthesis. Binds the lipid portion of GPI-anchor. May act as an organizer in the transmembrane layer to recruit other subunits, and thus is essential for assembly of the complex. The protein is GPI-anchor transamidase component PIGU of Homo sapiens (Human).